The primary structure comprises 645 residues: Chaperone protein DnaK (645 aa).

Threonine 199 is subject to Phosphothreonine; by autocatalysis. Disordered regions lie at residues 509–530 and 615–645; these read GALS…AEED and EAGA…EVKE. Basic and acidic residues predominate over residues 518–530; sequence QMQKDAEANAEED. The segment covering 615 to 626 has biased composition (low complexity); it reads EAGADAAGAAGA. Positions 631-645 are enriched in acidic residues; the sequence is GDDDDAIDAEFEVKE.

This sequence belongs to the heat shock protein 70 family.

Functionally, acts as a chaperone. This chain is Chaperone protein DnaK, found in Rhodopirellula baltica (strain DSM 10527 / NCIMB 13988 / SH1).